The sequence spans 894 residues: Phosphinomethylmalate isomerase (894 aa).

Positions 438, 504, and 507 each coordinate [4Fe-4S] cluster.

Belongs to the aconitase/IPM isomerase family. [4Fe-4S] cluster is required as a cofactor.

It carries out the reaction phosphinomethylmalate = phosphinomethylisomalate. The catalysed reaction is phosphinomethylmalate = 2-(phosphinatomethylidene)butanedioate + H2O. It catalyses the reaction 2-(phosphinatomethylidene)butanedioate + H2O = phosphinomethylisomalate. The protein operates within secondary metabolite biosynthesis; bialaphos biosynthesis. Isomerase involved in the biosynthesis of phosphinothricin tripeptide (PTT), also known as bialaphos (BA), a natural-product antibiotic and potent herbicide. Probably catalyzes the isomerization of phosphinomethylmalate to phosphinomethylisomalate. Shows no standard aconitase activity with citrate as a substrate and is not able to complement an acnA mutant. The chain is Phosphinomethylmalate isomerase from Streptomyces viridochromogenes (strain DSM 40736 / JCM 4977 / BCRC 1201 / Tue 494).